A 100-amino-acid polypeptide reads, in one-letter code: Glutamyl-tRNA(Gln) amidotransferase subunit C (100 aa).

Belongs to the GatC family. As to quaternary structure, heterotrimer of A, B and C subunits.

It catalyses the reaction L-glutamyl-tRNA(Gln) + L-glutamine + ATP + H2O = L-glutaminyl-tRNA(Gln) + L-glutamate + ADP + phosphate + H(+). The catalysed reaction is L-aspartyl-tRNA(Asn) + L-glutamine + ATP + H2O = L-asparaginyl-tRNA(Asn) + L-glutamate + ADP + phosphate + 2 H(+). Functionally, allows the formation of correctly charged Asn-tRNA(Asn) or Gln-tRNA(Gln) through the transamidation of misacylated Asp-tRNA(Asn) or Glu-tRNA(Gln) in organisms which lack either or both of asparaginyl-tRNA or glutaminyl-tRNA synthetases. The reaction takes place in the presence of glutamine and ATP through an activated phospho-Asp-tRNA(Asn) or phospho-Glu-tRNA(Gln). In Streptococcus pyogenes serotype M1, this protein is Glutamyl-tRNA(Gln) amidotransferase subunit C.